The sequence spans 425 residues: E3 ubiquitin-protein ligase GW2 (425 aa).

The RING-type; degenerate zinc finger occupies 62-105 (CPICFLYYPSLNRSKCCSKGICTECFLQMKPTHTAQPTQCPFCK).

In terms of tissue distribution, expressed in roots, shoots, leaves, inflorescence meristems, stamens, pistils, spikelet hulls and endosperms 4 days after fertilization.

It localises to the cytoplasm. It carries out the reaction S-ubiquitinyl-[E2 ubiquitin-conjugating enzyme]-L-cysteine + [acceptor protein]-L-lysine = [E2 ubiquitin-conjugating enzyme]-L-cysteine + N(6)-ubiquitinyl-[acceptor protein]-L-lysine.. Its pathway is protein modification; protein ubiquitination. Its function is as follows. E3 ubiquitin-protein ligase involved in the regulation of grain size. May limit grain width and weight by restricting cell proliferation of the spikelet hull. Possesses E3 ubiquitin-protein ligase activity in vitro. In Oryza sativa subsp. indica (Rice), this protein is E3 ubiquitin-protein ligase GW2.